The chain runs to 300 residues: Protease HtpX (300 aa).

Transmembrane regions (helical) follow at residues 4 to 24 (ILLF…TLRL) and 40 to 60 (SLLI…LFIS). His-145 contributes to the Zn(2+) binding site. The active site involves Glu-146. His-149 contacts Zn(2+). A run of 2 helical transmembrane segments spans residues 153-173 (GDMV…MFFA) and 193-213 (LGFF…GLVA). Zn(2+) is bound at residue Glu-225.

It belongs to the peptidase M48B family. Zn(2+) is required as a cofactor.

It is found in the cell inner membrane. The polypeptide is Protease HtpX (Chromohalobacter salexigens (strain ATCC BAA-138 / DSM 3043 / CIP 106854 / NCIMB 13768 / 1H11)).